The primary structure comprises 428 residues: Cytochrome c biogenesis protein CcsB (428 aa).

3 helical membrane passes run 14-34 (LRFAILLIIFIAISSGVGTFI), 72-92 (SNWFLFSLILLCISLAACSFR), and 162-182 (LGPIIVHIGLIILLIGSAYGN).

The protein belongs to the Ccs1/CcsB family. As to quaternary structure, may interact with CcsA.

The protein localises to the cellular thylakoid membrane. Functionally, required during biogenesis of c-type cytochromes (cytochrome c6 and cytochrome f) at the step of heme attachment. The polypeptide is Cytochrome c biogenesis protein CcsB (Prochlorococcus marinus subsp. pastoris (strain CCMP1986 / NIES-2087 / MED4)).